A 178-amino-acid polypeptide reads, in one-letter code: UPF0302 protein Bcer98_1244 (178 aa).

It belongs to the UPF0302 family.

In Bacillus cytotoxicus (strain DSM 22905 / CIP 110041 / 391-98 / NVH 391-98), this protein is UPF0302 protein Bcer98_1244.